The chain runs to 248 residues: tRNA1(Val) (adenine(37)-N6)-methyltransferase (248 aa).

Belongs to the methyltransferase superfamily. tRNA (adenine-N(6)-)-methyltransferase family.

The protein resides in the cytoplasm. The catalysed reaction is adenosine(37) in tRNA1(Val) + S-adenosyl-L-methionine = N(6)-methyladenosine(37) in tRNA1(Val) + S-adenosyl-L-homocysteine + H(+). Functionally, specifically methylates the adenine in position 37 of tRNA(1)(Val) (anticodon cmo5UAC). The chain is tRNA1(Val) (adenine(37)-N6)-methyltransferase from Pectobacterium carotovorum subsp. carotovorum (strain PC1).